A 488-amino-acid chain; its full sequence is UDP-N-acetylmuramate--L-alanine ligase (488 aa).

127 to 133 (GTHGKTT) contacts ATP.

This sequence belongs to the MurCDEF family.

The protein resides in the cytoplasm. It carries out the reaction UDP-N-acetyl-alpha-D-muramate + L-alanine + ATP = UDP-N-acetyl-alpha-D-muramoyl-L-alanine + ADP + phosphate + H(+). It participates in cell wall biogenesis; peptidoglycan biosynthesis. Its function is as follows. Cell wall formation. In Shewanella sp. (strain MR-4), this protein is UDP-N-acetylmuramate--L-alanine ligase.